The sequence spans 752 residues: Photosystem I P700 chlorophyll a apoprotein A1 (752 aa).

8 helical membrane passes run 73 to 96, 159 to 182, 198 to 222, 294 to 312, 349 to 372, 388 to 414, 436 to 458, and 533 to 551; these read IFAA…FHGA, LYVT…FHYH, LNHH…HVSA, ISHH…GHMY, WHAQ…HHMY, LCIF…IFMV, AIIS…LYVH, and FLVH…LILL. 2 residues coordinate [4Fe-4S] cluster: Cys-575 and Cys-584. A run of 2 helical transmembrane segments spans residues 591–612 and 666–688; these read HVFL…HFSW and LSAY…MFLF. Position 677 (His-677) interacts with chlorophyll a'. Residues Met-685 and Tyr-693 each contribute to the chlorophyll a site. Trp-694 contacts phylloquinone. A helical membrane pass occupies residues 726–746; the sequence is AVGVAHYLLGGIATTWAFFHA.

Belongs to the PsaA/PsaB family. The PsaA/B heterodimer binds the P700 chlorophyll special pair and subsequent electron acceptors. PSI consists of a core antenna complex that captures photons, and an electron transfer chain that converts photonic excitation into a charge separation. The cyanobacterial PSI reaction center is composed of one copy each of PsaA,B,C,D,E,F,I,J,K,L,M and X, and forms trimeric complexes. PSI electron transfer chain: 5 chlorophyll a, 1 chlorophyll a', 2 phylloquinones and 3 4Fe-4S clusters. PSI core antenna: 90 chlorophyll a, 22 carotenoids, 3 phospholipids and 1 galactolipid. P700 is a chlorophyll a/chlorophyll a' dimer, A0 is one or more chlorophyll a, A1 is one or both phylloquinones and FX is a shared 4Fe-4S iron-sulfur center. serves as cofactor.

It localises to the cellular thylakoid membrane. The enzyme catalyses reduced [plastocyanin] + hnu + oxidized [2Fe-2S]-[ferredoxin] = oxidized [plastocyanin] + reduced [2Fe-2S]-[ferredoxin]. Functionally, psaA and PsaB bind P700, the primary electron donor of photosystem I (PSI), as well as the electron acceptors A0, A1 and FX. PSI is a plastocyanin/cytochrome c6-ferredoxin oxidoreductase, converting photonic excitation into a charge separation, which transfers an electron from the donor P700 chlorophyll pair to the spectroscopically characterized acceptors A0, A1, FX, FA and FB in turn. Oxidized P700 is reduced on the lumenal side of the thylakoid membrane by plastocyanin or cytochrome c6. This Mastigocladus laminosus (Fischerella sp.) protein is Photosystem I P700 chlorophyll a apoprotein A1.